Reading from the N-terminus, the 133-residue chain is S-adenosylmethionine decarboxylase proenzyme (133 aa).

The Schiff-base intermediate with substrate; via pyruvic acid role is filled by Ser-64. A Pyruvic acid (Ser); by autocatalysis modification is found at Ser-64. His-69 acts as the Proton acceptor; for processing activity in catalysis. Residue Cys-84 is the Proton donor; for catalytic activity of the active site.

This sequence belongs to the prokaryotic AdoMetDC family. Type 1 subfamily. In terms of assembly, heterotetramer of two alpha and two beta chains arranged as a dimer of alpha/beta heterodimers. Pyruvate serves as cofactor. In terms of processing, is synthesized initially as an inactive proenzyme. Formation of the active enzyme involves a self-maturation process in which the active site pyruvoyl group is generated from an internal serine residue via an autocatalytic post-translational modification. Two non-identical subunits are generated from the proenzyme in this reaction, and the pyruvate is formed at the N-terminus of the alpha chain, which is derived from the carboxyl end of the proenzyme. The post-translation cleavage follows an unusual pathway, termed non-hydrolytic serinolysis, in which the side chain hydroxyl group of the serine supplies its oxygen atom to form the C-terminus of the beta chain, while the remainder of the serine residue undergoes an oxidative deamination to produce ammonia and the pyruvoyl group blocking the N-terminus of the alpha chain.

It catalyses the reaction S-adenosyl-L-methionine + H(+) = S-adenosyl 3-(methylsulfanyl)propylamine + CO2. It functions in the pathway amine and polyamine biosynthesis; S-adenosylmethioninamine biosynthesis; S-adenosylmethioninamine from S-adenosyl-L-methionine: step 1/1. Its function is as follows. Catalyzes the decarboxylation of S-adenosylmethionine to S-adenosylmethioninamine (dcAdoMet), the propylamine donor required for the synthesis of the polyamines spermine and spermidine from the diamine putrescine. This chain is S-adenosylmethionine decarboxylase proenzyme, found in Sulfurihydrogenibium sp. (strain YO3AOP1).